The primary structure comprises 229 residues: Ribonuclease S-6 (229 aa).

The N-terminal stretch at 1–27 (MGITGMIYMVPMVFSLIVLISCSSTMG) is a signal peptide. Position 36 (Q36) interacts with RNA. C42 and C49 form a disulfide bridge. RNA is bound at residue H60. H60 acts as the Proton donor in catalysis. The cysteines at positions 75 and 119 are disulfide-linked. 2 N-linked (GlcNAc) asparagine glycosylation sites follow: N77 and N87. RNA-binding positions include 98–99 (NV), F108, 111–112 (RQ), and 115–116 (KH). The active site involves Q112. Residue H116 is the Proton acceptor of the active site. N145 carries N-linked (GlcNAc...) (high mannose) asparagine glycosylation. Intrachain disulfides connect C184-C222 and C199-C210. A glycan (N-linked (GlcNAc) asparagine; alternate) is linked at N188. N188 and N203 each carry an N-linked (GlcNAc...) asparagine; alternate glycan.

The protein belongs to the RNase T2 family. Post-translationally, the N-glycans attached at Asn-188 and Asn-203 consist of either monosaccharide (GlcNAc) or disaccharide (GlcNAc-GlcNAc) that could not be distinguished.

It catalyses the reaction a ribonucleotidyl-ribonucleotide-RNA + H2O = a 3'-end 3'-phospho-ribonucleotide-RNA + a 5'-end dephospho-ribonucleoside-RNA + H(+). In terms of biological role, self-incompatibility (SI) is the inherited ability of a flowering plant to prevent self-fertilization by discriminating between self and non-self pollen during pollination. In many species, self-incompatibility is controlled by the single, multiallelic locus S. The protein is Ribonuclease S-6 of Pyrus pyrifolia (Chinese pear).